A 393-amino-acid polypeptide reads, in one-letter code: MQRAAAASRATAWSTARHGAARVTASASFSGGGGIVAGAALPLRVRGGQLMSLPLLSGGRAVTARVAAAEAPLPADDADAAAGRERGALAETAQLGAMIVAWYLLNIYFNIYNKQVLQPLPFPYTITAFQLAFGSFVIFLMWALKLHPAPRISISQLAKIAPLAAGHMLGTVFTNMSLSKVAVSFTHTIKASEPFFTVLLSAFFLGETPSLLVLGSLVPIVGGVALASLTELSFNWIGFWSAMASNLLYQSRNVLSKKLLGGEEEALDDINLFSILTILSFLLSLPLMLFSEGVKFSPGYLRSTGLNLQELCVRAALAGFCFHGYQKLSYLILARVSPVTHSVANCVKRVVVIVASVLFFRTPISPVNALGTGVALGGVFLYSRLKRTKPKNA.

The transit peptide at 1 to 65 (MQRAAAASRA…LSGGRAVTAR (65 aa)) directs the protein to the chloroplast. A run of 7 helical transmembrane segments spans residues 89–109 (LAETAQLGAMIVAWYLLNIYF), 124–144 (YTITAFQLAFGSFVIFLMWAL), 164–183 (AAGHMLGTVFTNMSLSKVAV), 195–217 (FFTVLLSAFFLGETPSLLVLGSL), 232–249 (LSFNWIGFWSAMASNLLY), 270–290 (INLFSILTILSFLLSLPLMLF), and 362–382 (TPISPVNALGTGVALGGVFLY). One can recognise an EamA domain in the interval 123-228 (PYTITAFQLA…PIVGGVALAS (106 aa)).

This sequence belongs to the TPT transporter family. PPT (TC 2.A.7.9) subfamily.

The protein localises to the plastid. Its subcellular location is the chloroplast membrane. In terms of biological role, phosphoenolpyruvate/phosphate translocator that transports phosphoenolpyruvate (PEP) and dihydroxyacetone phosphate. The protein is Phosphoenolpyruvate/phosphate translocator 3, chloroplastic (PPT3) of Oryza sativa subsp. japonica (Rice).